Consider the following 183-residue polypeptide: Large ribosomal subunit protein uL6 (183 aa).

Belongs to the universal ribosomal protein uL6 family. As to quaternary structure, part of the 50S ribosomal subunit.

In terms of biological role, this protein binds to the 23S rRNA, and is important in its secondary structure. It is located near the subunit interface in the base of the L7/L12 stalk, and near the tRNA binding site of the peptidyltransferase center. In Chlamydia felis (strain Fe/C-56) (Chlamydophila felis), this protein is Large ribosomal subunit protein uL6.